The sequence spans 399 residues: Probable endo-xylogalacturonan hydrolase A (399 aa).

Positions M1–A19 are cleaved as a signal peptide. 5 PbH1 repeats span residues T177–E207, S208–P229, C231–S251, V260–P283, and V293–S314. D222 acts as the Proton donor in catalysis. Residue H245 is part of the active site. 2 N-linked (GlcNAc...) asparagine glycosylation sites follow: N295 and N382.

Belongs to the glycosyl hydrolase 28 family.

The protein resides in the secreted. Pectinolytic enzyme involved in the degradation of xylogalacturonan (xga), a galacturonan backbone heavily substituted with xylose, and which is one important component of the hairy regions of pectin. Activity requires a galacturonic acid backbone substituted with xylose. The sequence is that of Probable endo-xylogalacturonan hydrolase A (xghA) from Emericella nidulans (strain FGSC A4 / ATCC 38163 / CBS 112.46 / NRRL 194 / M139) (Aspergillus nidulans).